The sequence spans 449 residues: Exodeoxyribonuclease 7 large subunit (449 aa).

This sequence belongs to the XseA family. As to quaternary structure, heterooligomer composed of large and small subunits.

Its subcellular location is the cytoplasm. It catalyses the reaction Exonucleolytic cleavage in either 5'- to 3'- or 3'- to 5'-direction to yield nucleoside 5'-phosphates.. Functionally, bidirectionally degrades single-stranded DNA into large acid-insoluble oligonucleotides, which are then degraded further into small acid-soluble oligonucleotides. The polypeptide is Exodeoxyribonuclease 7 large subunit (Salmonella schwarzengrund (strain CVM19633)).